The chain runs to 115 residues: Salivary protein gSG6 (115 aa).

Positions 1-28 (MAIRVELLLAMVLLPLLLLESVVPHAAA) are cleaved as a signal peptide.

As to expression, female saliva (at protein level). Distal-lateral lobes of female salivary gland (at protein level). Not detected in male salivary gland (at protein level).

It is found in the secreted. Required for efficient probing and blood feeding. In Anopheles gambiae (African malaria mosquito), this protein is Salivary protein gSG6.